The chain runs to 178 residues: MHSSALLCCLVLLTGVRASPGQGTQSENSCTRFPGNLPHMLRDLRDVFSRVKTFFQMKDQLDNILLKESLLEDFKGYLGCQALSEMIQFYLEEVMPQAENHDPDIKEHVNSLGENLKTLRLRLRRCHRFLPCENKSKAVEQVKNAFSKLQEKGVYKAMSEFDIFINYIEAYMTMKIQN.

Positions 1–18 (MHSSALLCCLVLLTGVRA) are cleaved as a signal peptide. Intrachain disulfides connect cysteine 30/cysteine 126 and cysteine 80/cysteine 132. Asparagine 134 carries an N-linked (GlcNAc...) asparagine glycan.

It belongs to the IL-10 family. In terms of assembly, homodimer. Interacts with IL10RA and IL10RB.

It is found in the secreted. Major immune regulatory cytokine that acts on many cells of the immune system where it has profound anti-inflammatory functions, limiting excessive tissue disruption caused by inflammation. Mechanistically, IL10 binds to its heterotetrameric receptor comprising IL10RA and IL10RB leading to JAK1 and STAT2-mediated phosphorylation of STAT3. In turn, STAT3 translocates to the nucleus where it drives expression of anti-inflammatory mediators. Targets antigen-presenting cells (APCs) such as macrophages and monocytes and inhibits their release of pro-inflammatory cytokines including granulocyte-macrophage colony-stimulating factor /GM-CSF, granulocyte colony-stimulating factor/G-CSF, IL-1 alpha, IL-1 beta, IL-6, IL-8 and TNF-alpha. Also interferes with antigen presentation by reducing the expression of MHC-class II and co-stimulatory molecules, thereby inhibiting their ability to induce T cell activation. In addition, controls the inflammatory response of macrophages by reprogramming essential metabolic pathways including mTOR signaling. The polypeptide is Interleukin-10 (IL10) (Cercocebus atys (Sooty mangabey)).